Consider the following 184-residue polypeptide: Mitochondrial translation release factor in rescue (184 aa).

The transit peptide at 1–98 directs the protein to the mitochondrion; the sequence is MSSRSTWALL…HVPSGIVVKC (98 aa). Positions 60–124 are GGQ domain; the sequence is ESELEEQFVK…LQEKVDVFYN (65 aa). Positions 74–76 match the GGQ motif; sequence GGQ. Gln76 carries the post-translational modification N5-methylglutamine. Residues 130 to 178 are a coiled coil; it reads VHKEKLEAERRKRERKKRAKETLEKKKLLKELREASQNITEKKADADGI. The segment at 132 to 184 is disordered; sequence KEKLEAERRKRERKKRAKETLEKKKLLKELREASQNITEKKADADGIPRGFQE. Over residues 149 to 184 the composition is skewed to basic and acidic residues; sequence KETLEKKKLLKELREASQNITEKKADADGIPRGFQE.

The protein belongs to the prokaryotic/mitochondrial release factor family. As to quaternary structure, interacts (via C-terminus) with MTRES1 (via S4 domain). Associates with mitoribosomal S39 large subunit, peptidyl tRNA and nascent chain. Methylation of glutamine in the GGQ triplet by HEMK1.

The protein localises to the mitochondrion. Part of a mitoribosome-associated quality control pathway that prevents aberrant translation by responding to interruptions during elongation. As heterodimer with MTRES1, ejects the unfinished nascent chain and peptidyl transfer RNA (tRNA), respectively, from stalled ribosomes. Recruitment of mitoribosome biogenesis factors to these quality control intermediates suggests additional roles for MTRES1 and MTRF during mitoribosome rescue. This Mus musculus (Mouse) protein is Mitochondrial translation release factor in rescue.